A 517-amino-acid polypeptide reads, in one-letter code: Crotonobetaine/carnitine--CoA ligase (517 aa).

It belongs to the ATP-dependent AMP-binding enzyme family.

It catalyses the reaction 4-(trimethylamino)butanoate + ATP + CoA = 4-(trimethylamino)butanoyl-CoA + AMP + diphosphate. The enzyme catalyses crotonobetaine + ATP + CoA = crotonobetainyl-CoA + AMP + diphosphate. The catalysed reaction is (R)-carnitine + ATP + CoA = (R)-carnitinyl-CoA + AMP + diphosphate. It participates in amine and polyamine metabolism; carnitine metabolism. Its function is as follows. Catalyzes the transfer of CoA to carnitine, generating the initial carnitinyl-CoA needed for the CaiB reaction cycle. Also has activity toward crotonobetaine and gamma-butyrobetaine. The chain is Crotonobetaine/carnitine--CoA ligase from Escherichia coli O139:H28 (strain E24377A / ETEC).